A 424-amino-acid polypeptide reads, in one-letter code: Histidinol dehydrogenase (424 aa).

NAD(+) contacts are provided by tyrosine 121, glutamine 183, and asparagine 206. Substrate contacts are provided by serine 229, glutamine 251, and histidine 254. Residues glutamine 251 and histidine 254 each coordinate Zn(2+). Catalysis depends on proton acceptor residues glutamate 319 and histidine 320. Substrate is bound by residues histidine 320, aspartate 353, glutamate 407, and histidine 412. A Zn(2+)-binding site is contributed by aspartate 353. Position 412 (histidine 412) interacts with Zn(2+).

It belongs to the histidinol dehydrogenase family. The cofactor is Zn(2+).

The enzyme catalyses L-histidinol + 2 NAD(+) + H2O = L-histidine + 2 NADH + 3 H(+). It participates in amino-acid biosynthesis; L-histidine biosynthesis; L-histidine from 5-phospho-alpha-D-ribose 1-diphosphate: step 9/9. Its function is as follows. Catalyzes the sequential NAD-dependent oxidations of L-histidinol to L-histidinaldehyde and then to L-histidine. This Geobacillus kaustophilus (strain HTA426) protein is Histidinol dehydrogenase.